Reading from the N-terminus, the 195-residue chain is Phosphoheptose isomerase (195 aa).

Residues 35-195 form the SIS domain; it reads LCVALYRGDK…EKEIFGDGVN (161 aa). Residue 51–53 coordinates substrate; it reads NGG. Positions 60 and 64 each coordinate Zn(2+). Substrate contacts are provided by residues E64, 93 to 94, 119 to 121, S124, and Q171; these read ND and STS. Q171 and H179 together coordinate Zn(2+).

It belongs to the SIS family. GmhA subfamily. Homotetramer. Requires Zn(2+) as cofactor.

The protein localises to the cytoplasm. The catalysed reaction is 2 D-sedoheptulose 7-phosphate = D-glycero-alpha-D-manno-heptose 7-phosphate + D-glycero-beta-D-manno-heptose 7-phosphate. It participates in carbohydrate biosynthesis; D-glycero-D-manno-heptose 7-phosphate biosynthesis; D-glycero-alpha-D-manno-heptose 7-phosphate and D-glycero-beta-D-manno-heptose 7-phosphate from sedoheptulose 7-phosphate: step 1/1. Functionally, catalyzes the isomerization of sedoheptulose 7-phosphate in D-glycero-D-manno-heptose 7-phosphate. The sequence is that of Phosphoheptose isomerase from Sulfurimonas denitrificans (strain ATCC 33889 / DSM 1251) (Thiomicrospira denitrificans (strain ATCC 33889 / DSM 1251)).